The chain runs to 361 residues: Ornithine carbamoyltransferase, mitochondrial (361 aa).

A mitochondrion-targeting transit peptide spans 1–24 (MIPTARCGALRQKIPVQAVRQYSS). Carbamoyl phosphate contacts are provided by residues 89–92 (STRT), Arg-140, His-167, and Gln-170. L-ornithine is bound by residues Asn-207, Asp-273, Ser-277, and Met-278. Cys-315 acts as the Proton acceptor in catalysis. Carbamoyl phosphate-binding positions include 315–316 (CL) and Arg-342.

It belongs to the aspartate/ornithine carbamoyltransferase superfamily. OTCase family. In terms of assembly, homotrimer.

The protein localises to the mitochondrion matrix. The enzyme catalyses carbamoyl phosphate + L-ornithine = L-citrulline + phosphate + H(+). Its pathway is amino-acid biosynthesis; L-arginine biosynthesis; L-arginine from L-ornithine and carbamoyl phosphate: step 1/3. This Aspergillus terreus protein is Ornithine carbamoyltransferase, mitochondrial (arg1).